Consider the following 400-residue polypeptide: Diphosphomevalonate decarboxylase (400 aa).

(R)-5-diphosphomevalonate is bound by residues 19 to 22, Arg-75, 154 to 159, and Thr-210; these read YWGK and SGSACR. The tract at residues 381–400 is disordered; it reads DGPRTLGPEEALLSPDGLPK.

Belongs to the diphosphomevalonate decarboxylase family.

The catalysed reaction is (R)-5-diphosphomevalonate + ATP = isopentenyl diphosphate + ADP + phosphate + CO2. It participates in isoprenoid biosynthesis; isopentenyl diphosphate biosynthesis via mevalonate pathway; isopentenyl diphosphate from (R)-mevalonate: step 3/3. In terms of biological role, diphosphomevalonate decarboxylase; part of the second module of ergosterol biosynthesis pathway that includes the middle steps of the pathway. The second module involves the formation of farnesyl diphosphate, which is also an important intermediate in the biosynthesis of ubiquinone, dolichol, heme and prenylated proteins. This module also plays a key role in the biosynthesis of triterpenes such as ganoderic acids (GA), a group of highly oxygenated lanostane-type triterpenoids which are well recognized as a main group of unique bioactive compounds in the medicinal mushroom Ganoderma lucidum. Activity by the mevalonate kinase first converts mevalonate into 5-phosphomevalonate. 5-phosphomevalonate is then further converted to 5-diphosphomevalonate by the phosphomevalonate kinase. The diphosphomevalonate decarboxylase MVD then produces isopentenyl diphosphate. The isopentenyl-diphosphate delta-isomerase then catalyzes the 1,3-allylic rearrangement of the homoallylic substrate isopentenyl (IPP) to its highly electrophilic allylic isomer, dimethylallyl diphosphate (DMAPP). Finally the farnesyl diphosphate synthase FPS catalyzes the sequential condensation of isopentenyl pyrophosphate with dimethylallyl pyrophosphate, and then with the resultant geranylpyrophosphate to the ultimate product farnesyl pyrophosphate. This Ganoderma lucidum (Ling zhi medicinal fungus) protein is Diphosphomevalonate decarboxylase.